The chain runs to 283 residues: MELWYTEEHTDKVRFSIKVDEQLYSGKSDFQRIDVFKSQEFGTFFTLDGLMMVTEKDEFIYHDMIVHVPMATNPNIKNVLVIGAGDGGTVRELTRYETIEKIDMVEIDKLVVDVCREYLPQTANKLDDPRVSLFFEDGLKFVRSVENKYDLIIVDSTDPFGPGEGLFTREFYGNCFKALKEDGILVNQHESPYYEEYARGMKRAHKRIKECFPVCRVYQAHIPTYPSGHWLFGFASKKYDPLNADIEKWNDLGLKTKYYNTDLHKGCFALPNYVKEMLENVDE.

The PABS domain maps to 2-237 (ELWYTEEHTD…GHWLFGFASK (236 aa)). Q31 lines the S-methyl-5'-thioadenosine pocket. 2 residues coordinate spermidine: H62 and D86. Residues E106 and 137–138 (DG) each bind S-methyl-5'-thioadenosine. D155 functions as the Proton acceptor in the catalytic mechanism. Position 155-158 (155-158 (DSTD)) interacts with spermidine. Residue P162 coordinates S-methyl-5'-thioadenosine.

The protein belongs to the spermidine/spermine synthase family. Homodimer or homotetramer.

Its subcellular location is the cytoplasm. It catalyses the reaction S-adenosyl 3-(methylsulfanyl)propylamine + putrescine = S-methyl-5'-thioadenosine + spermidine + H(+). Its pathway is amine and polyamine biosynthesis; spermidine biosynthesis; spermidine from putrescine: step 1/1. In terms of biological role, catalyzes the irreversible transfer of a propylamine group from the amino donor S-adenosylmethioninamine (decarboxy-AdoMet) to putrescine (1,4-diaminobutane) to yield spermidine. The sequence is that of Polyamine aminopropyltransferase from Clostridium perfringens (strain 13 / Type A).